The following is a 139-amino-acid chain: ATP synthase epsilon chain (139 aa).

This sequence belongs to the ATPase epsilon chain family. F-type ATPases have 2 components, CF(1) - the catalytic core - and CF(0) - the membrane proton channel. CF(1) has five subunits: alpha(3), beta(3), gamma(1), delta(1), epsilon(1). CF(0) has three main subunits: a, b and c.

The protein localises to the cell membrane. In terms of biological role, produces ATP from ADP in the presence of a proton gradient across the membrane. The polypeptide is ATP synthase epsilon chain (Streptococcus pneumoniae serotype 2 (strain D39 / NCTC 7466)).